The chain runs to 71 residues: Transcription modulator YdgT (71 aa).

It belongs to the Hha/YmoA/Cnu family. In terms of assembly, forms complexes with both H-NS and StpA.

Functionally, binds to H-NS and modified the range of genes it silences; H-NS alonge silences core gene while the H-NS-Hha complex (and presumably also H-NS-YdgT) silences genes acquired by horizontal gene transfer. Plays a role silencing virulence factors in the absence of factors that induce pathogenicity. The complex formed with H-NS binds to the specific 26-bp cnb site in the origin of replication oriC. The polypeptide is Transcription modulator YdgT (ydgT) (Salmonella choleraesuis (strain SC-B67)).